The chain runs to 294 residues: Transcription termination/antitermination protein NusG (294 aa).

Residues 1–91 are disordered; sequence MSDPNLNDAV…EEAEPAAPVD (91 aa). Acidic residues predominate over residues 25–39; sequence DIVEAADSVDPDQAE. Over residues 40–53 the composition is skewed to low complexity; it reads AADLAAGEPAERAA. Residues 59–85 are compositionally biased toward acidic residues; it reads DDSDEDDAAAEEAVEADDESADEEEAE.

It belongs to the NusG family.

Functionally, participates in transcription elongation, termination and antitermination. The protein is Transcription termination/antitermination protein NusG of Streptomyces griseus.